Reading from the N-terminus, the 172-residue chain is MNPFRWSFRAQFLLGFLACAGLLAYAIYVQLHLGLEPCPLCIFQRIAFAALAVFFLLGALHGPRAAAGRKVYGVLSFIAAGVGMGIAARHVWVQIRPKDMMSSCGPPLSFLSETMGPFEVFRTVLTGTGDCGNIDWRFLGLSMPMWSMVWFVGLALWALYAGFKVRRSSVHH.

Over 1–11 the chain is Cytoplasmic; that stretch reads MNPFRWSFRAQ. The helical transmembrane segment at 12 to 28 threads the bilayer; sequence FLLGFLACAGLLAYAIY. Residues 29–46 are Periplasmic-facing; that stretch reads VQLHLGLEPCPLCIFQRI. Cysteine 38 and cysteine 41 are oxidised to a cystine. A helical membrane pass occupies residues 47 to 63; that stretch reads AFAALAVFFLLGALHGP. Over 64–70 the chain is Cytoplasmic; that stretch reads RAAAGRK. The helical transmembrane segment at 71-88 threads the bilayer; it reads VYGVLSFIAAGVGMGIAA. At 89-145 the chain is on the periplasmic side; that stretch reads RHVWVQIRPKDMMSSCGPPLSFLSETMGPFEVFRTVLTGTGDCGNIDWRFLGLSMPM. A disulfide bond links cysteine 104 and cysteine 131. The helical transmembrane segment at 146 to 164 threads the bilayer; that stretch reads WSMVWFVGLALWALYAGFK. Residues 165–172 lie on the Cytoplasmic side of the membrane; it reads VRRSSVHH.

The protein belongs to the DsbB family.

It localises to the cell inner membrane. Required for disulfide bond formation in some periplasmic proteins. Acts by oxidizing the DsbA protein. The polypeptide is Disulfide bond formation protein B (Xanthomonas axonopodis pv. citri (strain 306)).